Consider the following 382-residue polypeptide: MTEFWLISAPGEKTCQQTWEKLHAATSKNNNLAVTSKFNIPDLKVGTLDVLVGLSDELAKLDAFVEGVVKKVAQYMADVLEDSKDKVQENLLANGVDLVTYITRFQWDMAKYPIKQSLKNISEIIAKGVTQIDNDLKSRASAYNNLKGNLQNLERKNAGSLLTRSLAEIVKKDDFVLDSEYLVTLLVVVPKLNHNDWIKQYETLAEMVVPRSSNVLSEDQDSYLCNVTLFRKAVDDFRHKARENKFIVRDFQYNEEEMKADKEEMNRLSTDKKKQFGPLVRWLKVNFSEAFIAWIHVKALRVFVESVLRYGLPVNFQAMLLQPNKKTLKKLREVLHELYKHLDSSAAAIIDAPMDIPGLNLSQQEYYPYVYYKIDCNLLEFK.

Thr-2 carries the N-acetylthreonine modification.

It belongs to the V-ATPase C subunit family. As to quaternary structure, V-ATPase is a heteromultimeric enzyme made up of two complexes: the ATP-hydrolytic V1 complex and the proton translocation V0 complex. The V1 complex consists of three catalytic AB heterodimers that form a heterohexamer, three peripheral stalks each consisting of EG heterodimers, one central rotor including subunits D and F, and the regulatory subunits C and H. The proton translocation complex V0 consists of the proton transport subunit a, a ring of proteolipid subunits c9c'', rotary subunit d, subunits e and f, and the accessory subunits ATP6AP1/Ac45 and ATP6AP2/PRR.

The protein localises to the cytoplasmic vesicle. Its subcellular location is the secretory vesicle. It is found in the synaptic vesicle membrane. It localises to the clathrin-coated vesicle membrane. Functionally, subunit of the V1 complex of vacuolar(H+)-ATPase (V-ATPase), a multisubunit enzyme composed of a peripheral complex (V1) that hydrolyzes ATP and a membrane integral complex (V0) that translocates protons. V-ATPase is responsible for acidifying and maintaining the pH of intracellular compartments and in some cell types, is targeted to the plasma membrane, where it is responsible for acidifying the extracellular environment. Subunit C is necessary for the assembly of the catalytic sector of the enzyme and is likely to have a specific function in its catalytic activity. In Macaca fascicularis (Crab-eating macaque), this protein is V-type proton ATPase subunit C 1 (ATP6V1C1).